The sequence spans 192 residues: ADP-ribosylation factor-like protein 14 (192 aa).

Gly-2 carries N-myristoyl glycine lipidation. GTP-binding positions include 20-27, 64-68, and 123-126; these read GLDSAGKS, DVGGQ, and NKQD.

It belongs to the small GTPase superfamily. Arf family. As to quaternary structure, interacts with ARL14EP. In terms of tissue distribution, expressed in immature dendritic cells.

The protein localises to the cytoplasmic vesicle. Functionally, GTPase that recruits MYO1E to MHC class II-containing vesicles via the effector protein ARL14EP and hence controls the movement of these vesicles along the actin cytoskeleton in dendritic cells. This is ADP-ribosylation factor-like protein 14 (ARL14) from Homo sapiens (Human).